A 408-amino-acid chain; its full sequence is Imidazolonepropionase (408 aa).

Fe(3+)-binding residues include His73 and His75. Zn(2+) contacts are provided by His73 and His75. 3 residues coordinate 4-imidazolone-5-propanoate: Arg82, Tyr145, and His178. Residue Tyr145 coordinates N-formimidoyl-L-glutamate. His243 contributes to the Fe(3+) binding site. His243 serves as a coordination point for Zn(2+). Residue Gln246 coordinates 4-imidazolone-5-propanoate. Asp318 is a Fe(3+) binding site. Asp318 provides a ligand contact to Zn(2+). Asn320 and Gly322 together coordinate N-formimidoyl-L-glutamate. Ser323 contacts 4-imidazolone-5-propanoate.

The protein belongs to the metallo-dependent hydrolases superfamily. HutI family. Zn(2+) serves as cofactor. The cofactor is Fe(3+).

It is found in the cytoplasm. The catalysed reaction is 4-imidazolone-5-propanoate + H2O = N-formimidoyl-L-glutamate. It participates in amino-acid degradation; L-histidine degradation into L-glutamate; N-formimidoyl-L-glutamate from L-histidine: step 3/3. Its function is as follows. Catalyzes the hydrolytic cleavage of the carbon-nitrogen bond in imidazolone-5-propanoate to yield N-formimidoyl-L-glutamate. It is the third step in the universal histidine degradation pathway. The sequence is that of Imidazolonepropionase from Shewanella baltica (strain OS185).